Consider the following 870-residue polypeptide: Alanine--tRNA ligase (870 aa).

The Zn(2+) site is built by histidine 585, histidine 589, cysteine 689, and histidine 693.

It belongs to the class-II aminoacyl-tRNA synthetase family. It depends on Zn(2+) as a cofactor.

The protein resides in the cytoplasm. It carries out the reaction tRNA(Ala) + L-alanine + ATP = L-alanyl-tRNA(Ala) + AMP + diphosphate. Functionally, catalyzes the attachment of alanine to tRNA(Ala) in a two-step reaction: alanine is first activated by ATP to form Ala-AMP and then transferred to the acceptor end of tRNA(Ala). Also edits incorrectly charged Ser-tRNA(Ala) and Gly-tRNA(Ala) via its editing domain. This Picrophilus torridus (strain ATCC 700027 / DSM 9790 / JCM 10055 / NBRC 100828 / KAW 2/3) protein is Alanine--tRNA ligase.